The sequence spans 68 residues: Metallothionein-3 (68 aa).

N-acetylmethionine is present on methionine 1. Residues 1 to 30 form a beta region; sequence MDPETCPCPSGGSCTCADSCKCEGCKCTSC. Cysteine 6, cysteine 8, cysteine 14, cysteine 16, cysteine 20, cysteine 22, cysteine 25, cysteine 27, and cysteine 30 together coordinate a divalent metal cation. Residues 31–68 are alpha; it reads KKSCCSCCPAECEKCAKDCVCKGGEAAEAEAEKCSCCQ. Phosphoserine is present on serine 33. Positions 34, 35, 37, 38, 42, 45, 49, 51, 64, 66, and 67 each coordinate a divalent metal cation.

Belongs to the metallothionein superfamily. Type 1 family. In terms of tissue distribution, abundant in a subset of astrocytes in the normal human brain, but greatly reduced in the Alzheimer disease (AD) brain.

In terms of biological role, binds heavy metals. Contains three zinc and three copper atoms per polypeptide chain and only a negligible amount of cadmium. Inhibits survival and neurite formation of cortical neurons in vitro. The protein is Metallothionein-3 (MT3) of Homo sapiens (Human).